The primary structure comprises 507 residues: ATP synthase subunit alpha, chloroplastic (507 aa).

ATP is bound at residue 170 to 177 (IGDRQTGK).

This sequence belongs to the ATPase alpha/beta chains family. As to quaternary structure, F-type ATPases have 2 components, CF(1) - the catalytic core - and CF(0) - the membrane proton channel. CF(1) has five subunits: alpha(3), beta(3), gamma(1), delta(1), epsilon(1). CF(0) has four main subunits: a, b, b' and c.

The protein resides in the plastid. It is found in the chloroplast thylakoid membrane. It carries out the reaction ATP + H2O + 4 H(+)(in) = ADP + phosphate + 5 H(+)(out). In terms of biological role, produces ATP from ADP in the presence of a proton gradient across the membrane. The alpha chain is a regulatory subunit. This is ATP synthase subunit alpha, chloroplastic from Adiantum capillus-veneris (Maidenhair fern).